The primary structure comprises 122 residues: Large ribosomal subunit protein bL12 (122 aa).

The protein belongs to the bacterial ribosomal protein bL12 family. In terms of assembly, homodimer. Part of the ribosomal stalk of the 50S ribosomal subunit. Forms a multimeric L10(L12)X complex, where L10 forms an elongated spine to which 2 to 4 L12 dimers bind in a sequential fashion. Binds GTP-bound translation factors.

Forms part of the ribosomal stalk which helps the ribosome interact with GTP-bound translation factors. Is thus essential for accurate translation. This is Large ribosomal subunit protein bL12 from Deinococcus geothermalis (strain DSM 11300 / CIP 105573 / AG-3a).